We begin with the raw amino-acid sequence, 439 residues long: Paraneoplastic antigen-like protein 8A (439 aa).

The tract at residues 208–439 (SALKAETPNN…RRATNESRKV (232 aa)) is disordered. Over residues 231–249 (LVRRAGAKSRSRRKKQKKN) the composition is skewed to basic residues. Composition is skewed to basic and acidic residues over residues 314 to 326 (GPRE…RAEA), 395 to 404 (SRREASDQKA), and 423 to 439 (AKPE…SRKV).

It belongs to the PNMA family.

This is Paraneoplastic antigen-like protein 8A from Homo sapiens (Human).